Consider the following 74-residue polypeptide: Putative membrane protein insertion efficiency factor (74 aa).

It belongs to the UPF0161 family.

It is found in the cell inner membrane. In terms of biological role, could be involved in insertion of integral membrane proteins into the membrane. The protein is Putative membrane protein insertion efficiency factor of Endomicrobium trichonymphae.